Consider the following 178-residue polypeptide: Neuroblastoma suppressor of tumorigenicity 1 (178 aa).

The N-terminal stretch at 1–16 is a signal peptide; it reads MLWVLVGTVLPVMLLA. Cystine bridges form between C34-C84, C48-C98, C58-C117, C62-C119, and C81-C122. One can recognise a CTCK domain in the interval 34-123; the sequence is CEAKNITQIV…IVHCSCQACG (90 aa). Residues 130-178 form a disordered region; that stretch reads GLNVYMQGEDGPGSQPGSHSHSHPHPGCQTPEPEEPPGAPQVEEEGAED.

The protein belongs to the DAN family. In terms of assembly, homodimer. Most abundant in lung, brain, intestine and kidney.

It is found in the secreted. Functionally, possible candidate as a tumor suppressor gene of neuroblastoma. May play an important role in preventing cells from entering the final stage (G1/S) of the transformation process. This is Neuroblastoma suppressor of tumorigenicity 1 (Nbl1) from Rattus norvegicus (Rat).